Consider the following 590-residue polypeptide: Plasmepsin V (590 aa).

At 1–544 (MNNYFLRKEN…EKENIFLKVS (544 aa)) the chain is on the lumenal side. The stretch at 33–81 (CNNVENKIDNVGKKIENVGKKIGDMENKNDNVENKNDNVGNKNDNVKNA) forms a coiled coil. The region spanning 100–514 (YFLDIDIGKP…DLQQNQIAFI (415 aa)) is the Peptidase A1 domain. D118 is a catalytic residue. Cystine bridges form between C128–C211, C131–C134, C155–C166, C160–C171, C259–C518, C389–C434, and C443–C479. Basic and acidic residues predominate over residues 282-291 (KEKQKMDKSD). Residues 282–316 (KEKQKMDKSDNNSSNKGNVSIKLKNNDKNDDEENN) are disordered. The segment covering 292–304 (NNSSNKGNVSIKL) has biased composition (low complexity). The active site involves D365. Residues 545–565 (YINLYCLWLLLALTILLSLIL) traverse the membrane as a helical segment. The Cytoplasmic segment spans residues 566 to 590 (YVRKMFYMDYFPLSDQNKSPIQEST).

It belongs to the peptidase A1 family. In terms of assembly, component of a complex composed of SPC25 and PMV; the interaction is mediated via the transmembrane domains. The complex interacts with the SEC61 channel-forming translocon complex and is involved in the recognition and import of PEXEL motif-containing proteins into the ER for subsequent export. Post-translationally, it is not clear if the zymogen has a cleavable propeptide. In vitro, appears to be cleaved between Asn-80 and Ala-81. Cleavage of the putative propeptide is dispensable for catalytic activity.

It is found in the endoplasmic reticulum membrane. Inhibited by peptidomimetic inhibitor WEHI-842. Inhibited by Cu(2+) and Hg(2+). Functionally, during the asexual blood stage, plays an essential role in the export of several proteins into the host erythrocytes by cleaving the pentameric localization motif RxLxE/Q/D (termed Plasmodium export element (PEXEL)) located downstream of the N-terminal secretory signal sequence. Specifically, cleaves after the leucine residue in the RxLxE/Q/D (or RxLxxE) motif of exported proteins including RESA, EMP2, EMP3, KAHRP, RIF/Rifin and STEVOR. Also, by regulating protein export, plays an essential role in gametocyte development and thus, parasite transmission to the mosquito vector. This Plasmodium falciparum (isolate 3D7) protein is Plasmepsin V.